Consider the following 209-residue polypeptide: Probable GTP-binding protein EngB (209 aa).

The EngB-type G domain maps to 22–198; the sequence is TPLEIAFVGR…NRTVGSWLDA (177 aa). 2 residues coordinate Mg(2+): Ser-37 and Thr-59.

This sequence belongs to the TRAFAC class TrmE-Era-EngA-EngB-Septin-like GTPase superfamily. EngB GTPase family. The cofactor is Mg(2+).

Necessary for normal cell division and for the maintenance of normal septation. The protein is Probable GTP-binding protein EngB of Neisseria meningitidis serogroup B (strain ATCC BAA-335 / MC58).